A 303-amino-acid chain; its full sequence is UPF0282 protein PAE3680 (303 aa).

It belongs to the UPF0282 family.

This is UPF0282 protein PAE3680 from Pyrobaculum aerophilum (strain ATCC 51768 / DSM 7523 / JCM 9630 / CIP 104966 / NBRC 100827 / IM2).